A 74-amino-acid polypeptide reads, in one-letter code: MSDAAVPPKKASPKKAAAKKASPKKAAARKTAAKKTAKKPAVRKPAAKKRAAPKKKPAAKKAPKKAVKKAPKKK.

Positions 1–74 (MSDAAVPPKK…KAVKKAPKKK (74 aa)) are disordered. Residues 11–74 (ASPKKAAAKK…KAVKKAPKKK (64 aa)) show a composition bias toward basic residues.

It is found in the nucleus. It localises to the chromosome. The protein is Histone H1.C8/H1.M1 of Trypanosoma cruzi.